The chain runs to 149 residues: Calmodulin (149 aa).

Residue Ala-2 is modified to N-acetylalanine. EF-hand domains follow at residues 8 to 43, 44 to 79, 81 to 116, and 117 to 149; these read EQIA…LGQN, PTEA…KMKE, DSEE…LGEK, and LTDE…MTSK. Residues Asp-21, Asp-23, Asp-25, Thr-27, Glu-32, Asp-57, Asp-59, Asn-61, Thr-63, Glu-68, Asp-94, Asp-96, Asn-98, and Glu-105 each contribute to the Ca(2+) site. N6,N6,N6-trimethyllysine is present on Lys-116. Positions 130, 132, 134, 136, and 141 each coordinate Ca(2+).

The protein belongs to the calmodulin family.

Its function is as follows. Calmodulin mediates the control of a large number of enzymes, ion channels and other proteins by Ca(2+). Among the enzymes to be stimulated by the calmodulin-Ca(2+) complex are a number of protein kinases and phosphatases. This chain is Calmodulin, found in Suberites domuncula (Sponge).